A 195-amino-acid chain; its full sequence is Peptidyl-tRNA hydrolase (195 aa).

A tRNA-binding site is contributed by Tyr17. His22 functions as the Proton acceptor in the catalytic mechanism. Residues Tyr68, Asn70, and Asn116 each coordinate tRNA.

Belongs to the PTH family. In terms of assembly, monomer.

The protein resides in the cytoplasm. It carries out the reaction an N-acyl-L-alpha-aminoacyl-tRNA + H2O = an N-acyl-L-amino acid + a tRNA + H(+). In terms of biological role, hydrolyzes ribosome-free peptidyl-tRNAs (with 1 or more amino acids incorporated), which drop off the ribosome during protein synthesis, or as a result of ribosome stalling. Catalyzes the release of premature peptidyl moieties from peptidyl-tRNA molecules trapped in stalled 50S ribosomal subunits, and thus maintains levels of free tRNAs and 50S ribosomes. The sequence is that of Peptidyl-tRNA hydrolase from Shewanella baltica (strain OS155 / ATCC BAA-1091).